A 444-amino-acid polypeptide reads, in one-letter code: Tryptophan 5-hydroxylase 1 (444 aa).

The ACT domain occupies 19-94 (TLIFSLKNEV…TVLSVDSPDQ (76 aa)). S58 bears the Phosphoserine; by PKA mark. Residues Y235, R257, and T265 each contribute to the L-tryptophan site. Fe cation contacts are provided by H272, H277, and E317. Residues S336 and I366 each coordinate L-tryptophan.

The protein belongs to the biopterin-dependent aromatic amino acid hydroxylase family. Homotetramer. Interacts with DNAJC12. Requires Fe(2+) as cofactor. Post-translationally, ubiquitinated, leading to its degradation by the proteasome. Ubiquitinated is triggered by phosphorylation. Phosphorylated; triggering degradation by the proteasome.

It catalyses the reaction (6R)-L-erythro-5,6,7,8-tetrahydrobiopterin + L-tryptophan + O2 = 5-hydroxy-L-tryptophan + (4aS,6R)-4a-hydroxy-L-erythro-5,6,7,8-tetrahydrobiopterin. It participates in aromatic compound metabolism; serotonin biosynthesis; serotonin from L-tryptophan: step 1/2. Functionally, oxidizes L-tryptophan to 5-hydroxy-l-tryptophan in the rate-determining step of serotonin biosynthesis. The sequence is that of Tryptophan 5-hydroxylase 1 (Tph1) from Rattus norvegicus (Rat).